A 296-amino-acid polypeptide reads, in one-letter code: Elongation factor Ts (296 aa).

Residues T82–V85 form an involved in Mg(2+) ion dislocation from EF-Tu region.

It belongs to the EF-Ts family.

It localises to the cytoplasm. Its function is as follows. Associates with the EF-Tu.GDP complex and induces the exchange of GDP to GTP. It remains bound to the aminoacyl-tRNA.EF-Tu.GTP complex up to the GTP hydrolysis stage on the ribosome. The polypeptide is Elongation factor Ts (Aromatoleum aromaticum (strain DSM 19018 / LMG 30748 / EbN1) (Azoarcus sp. (strain EbN1))).